The primary structure comprises 447 residues: Protein CLT1, chloroplastic (447 aa).

The N-terminal 48 residues, 1–48 (MATTSSDRLIAGLTASIGSIESRYANPAQSVSLICRNQINGAPPIVLR), are a transit peptide targeting the chloroplast. Transmembrane regions (helical) follow at residues 103 to 123 (MEIV…RVLY), 135 to 155 (FFLA…ILYF), 172 to 192 (LPFL…MAAA), 200 to 220 (TTVL…IFLG), 228 to 248 (ILGC…GSGA), 256 to 276 (GILW…DTVM), 304 to 324 (IFQV…WGIP), 351 to 371 (GAPL…ISLL), 387 to 407 (TVSV…LGVA), and 413 to 433 (GFVA…WTPS).

Belongs to the CRT-like transporter family.

Its subcellular location is the plastid. It localises to the chloroplast membrane. Its function is as follows. Involved in thiol transport from the plastid to the cytosol. Transports probably both glutathione (GSH) and its precursor, gamma-glutamylcysteine (gamma-EC). Exhibits some functional redundancy with CLT3 in maintaining the root GSH pool. This is Protein CLT1, chloroplastic from Arabidopsis thaliana (Mouse-ear cress).